The sequence spans 303 residues: Glycine--tRNA ligase alpha subunit (303 aa).

Belongs to the class-II aminoacyl-tRNA synthetase family. Tetramer of two alpha and two beta subunits.

It localises to the cytoplasm. It carries out the reaction tRNA(Gly) + glycine + ATP = glycyl-tRNA(Gly) + AMP + diphosphate. In Salmonella arizonae (strain ATCC BAA-731 / CDC346-86 / RSK2980), this protein is Glycine--tRNA ligase alpha subunit.